Consider the following 1308-residue polypeptide: Tau-tubulin kinase 1 (1308 aa).

A Protein kinase domain is found at 34-297; it reads WKVLKKIGGG…LIMSVFENSM (264 aa). Residues 40 to 48 and Lys63 contribute to the ATP site; that span reads IGGGGFGEI. The active-site Proton acceptor is the Asp154. 6 disordered regions span residues 364 to 397, 418 to 448, 474 to 671, 720 to 899, 985 to 1085, and 1097 to 1308; these read LSDQENAPPILPGRPPEGLGPGPHLVPHPGGPEA, PCVEEEQSRGVGVPSSPVRAPPDSPTTPVRS, ERRS…APPF, QVPL…AGGG, EMES…LARL, and RLAS…PGAR. Ser441 carries the post-translational modification Phosphoserine. A compositionally biased stretch (polar residues) spans 485–496; that stretch reads PSRQACSSQPAQ. Position 541 is a phosphoserine (Ser541). Composition is skewed to basic and acidic residues over residues 541–555 and 574–589; these read SKEWVIIDKETELKD and ELRPLPEEGEERRRLG. Residues 638-647 are compositionally biased toward low complexity; sequence SPSHSPLHSG. Residues 735 to 769 show a composition bias toward acidic residues; sequence GEEEEEEEEEEEEEEEEEEEEEEEEEEEEEEEEEA. A compositionally biased stretch (basic and acidic residues) spans 786-795; that stretch reads GSERSTERSQ. Composition is skewed to polar residues over residues 868 to 885 and 1020 to 1035; these read PTGSQLDVSEPGTLSSIL and ASQQEPVTKKGTTISP. The span at 1097-1107 shows a compositional bias: low complexity; sequence RLASGASSSSS.

Belongs to the protein kinase superfamily. CK1 Ser/Thr protein kinase family. The cofactor is Mg(2+). Mn(2+) is required as a cofactor. As to expression, expressed in the brain. Strong expression in the cortical layers, the CA1 layers of the hippocampus and the granular layer of the cerebellum. Also expressed in the large cortical pyramidal cells in the temporal cortex, the CA1 pyramidal neurons and the cerebellum granular neurons.

The protein resides in the cytoplasm. The enzyme catalyses L-seryl-[protein] + ATP = O-phospho-L-seryl-[protein] + ADP + H(+). It catalyses the reaction L-threonyl-[protein] + ATP = O-phospho-L-threonyl-[protein] + ADP + H(+). In terms of biological role, serine/threonine kinase which is able to phosphorylate TAU on serine, threonine and tyrosine residues. Induces aggregation of TAU. In Mus musculus (Mouse), this protein is Tau-tubulin kinase 1 (Ttbk1).